Reading from the N-terminus, the 374-residue chain is DNA primase small subunit PriS (374 aa).

Residues aspartate 99, aspartate 101, and aspartate 281 contribute to the active site.

The protein belongs to the eukaryotic-type primase small subunit family. Heterodimer of a small subunit (PriS) and a large subunit (PriL). Mg(2+) serves as cofactor. Mn(2+) is required as a cofactor.

Functionally, catalytic subunit of DNA primase, an RNA polymerase that catalyzes the synthesis of short RNA molecules used as primers for DNA polymerase during DNA replication. The small subunit contains the primase catalytic core and has DNA synthesis activity on its own. Binding to the large subunit stabilizes and modulates the activity, increasing the rate of DNA synthesis while decreasing the length of the DNA fragments, and conferring RNA synthesis capability. The DNA polymerase activity may enable DNA primase to also catalyze primer extension after primer synthesis. May also play a role in DNA repair. The chain is DNA primase small subunit PriS from Methanoregula boonei (strain DSM 21154 / JCM 14090 / 6A8).